We begin with the raw amino-acid sequence, 72 residues long: Metallothionein-like protein type 2 A (72 aa).

The protein belongs to the metallothionein superfamily. Type 15 family. In terms of tissue distribution, leaves and roots.

Its function is as follows. Metallothioneins have a high content of cysteine residues that bind various heavy metals. This is Metallothionein-like protein type 2 A (MTA) from Solanum lycopersicum (Tomato).